A 370-amino-acid polypeptide reads, in one-letter code: Pulmonary surfactant-associated protein B (370 aa).

An N-terminal signal peptide occupies residues 1–24 (MAKSHLPPWLLLLLLPTLCGPGTA). Residues 25-184 (VWATSPLACA…PHTQDLSAQR (160 aa)) constitute a propeptide that is removed on maturation. The Saposin A-type domain occupies 26–66 (WATSPLACAQGPEFWCQSLEQALQCKALGHCLQEVWGHVGA). Saposin B-type domains follow at residues 66–148 (ADDL…QPGS), 188–265 (PLPL…SSVD), and 284–359 (QDPE…VATL). 9 disulfides stabilise this stretch: cysteine 70–cysteine 144, cysteine 73–cysteine 138, cysteine 101–cysteine 113, cysteine 192–cysteine 261, cysteine 195–cysteine 255, cysteine 219–cysteine 230, cysteine 288–cysteine 355, cysteine 291–cysteine 349, and cysteine 314–cysteine 324. Positions 264–370 (VDSIGQVPPT…PLQCIQSPHF (107 aa)) are excised as a propeptide. Asparagine 300 is a glycosylation site (N-linked (GlcNAc...) asparagine).

As to quaternary structure, homodimer; disulfide-linked.

It is found in the secreted. The protein localises to the extracellular space. It localises to the surface film. In terms of biological role, pulmonary surfactant-associated proteins promote alveolar stability by lowering the surface tension at the air-liquid interface in the peripheral air spaces. SP-B increases the collapse pressure of palmitic acid to nearly 70 millinewtons per meter. This Oryctolagus cuniculus (Rabbit) protein is Pulmonary surfactant-associated protein B (SFTPB).